A 147-amino-acid chain; its full sequence is uncharacterized protein (147 aa).

One can recognise an HTH LytTR-type domain in the interval 44–147 (LVGYIDKEIH…LKSIKERLSI (104 aa)).

The protein localises to the cytoplasm. This is an uncharacterized protein from Staphylococcus aureus (strain bovine RF122 / ET3-1).